Consider the following 257-residue polypeptide: 1-(5-phosphoribosyl)-5-[(5-phosphoribosylamino)methylideneamino] imidazole-4-carboxamide isomerase (257 aa).

Asp-8 acts as the Proton acceptor in catalysis. Catalysis depends on Asp-131, which acts as the Proton donor.

The protein belongs to the HisA/HisF family.

It localises to the cytoplasm. The enzyme catalyses 1-(5-phospho-beta-D-ribosyl)-5-[(5-phospho-beta-D-ribosylamino)methylideneamino]imidazole-4-carboxamide = 5-[(5-phospho-1-deoxy-D-ribulos-1-ylimino)methylamino]-1-(5-phospho-beta-D-ribosyl)imidazole-4-carboxamide. The protein operates within amino-acid biosynthesis; L-histidine biosynthesis; L-histidine from 5-phospho-alpha-D-ribose 1-diphosphate: step 4/9. This chain is 1-(5-phosphoribosyl)-5-[(5-phosphoribosylamino)methylideneamino] imidazole-4-carboxamide isomerase, found in Nitrosospira multiformis (strain ATCC 25196 / NCIMB 11849 / C 71).